The following is a 166-amino-acid chain: UPF0561 protein C2orf68 homolog (166 aa).

Basic and acidic residues predominate over residues 32–49 (NQLDRDDYDKKVKQAAKE). The interval 32-107 (NQLDRDDYDK…SELEPPGRQL (76 aa)) is disordered. The segment covering 91–101 (ESSSSGSSELE) has biased composition (low complexity).

It belongs to the UPF0561 family.

This is UPF0561 protein C2orf68 homolog from Mus musculus (Mouse).